Here is a 208-residue protein sequence, read N- to C-terminus: Ribosomal RNA small subunit methyltransferase G (208 aa).

Residues G76, L81, 127–128 (VE), and R142 contribute to the S-adenosyl-L-methionine site.

It belongs to the methyltransferase superfamily. RNA methyltransferase RsmG family.

It localises to the cytoplasm. It catalyses the reaction guanosine(527) in 16S rRNA + S-adenosyl-L-methionine = N(7)-methylguanosine(527) in 16S rRNA + S-adenosyl-L-homocysteine. Its function is as follows. Specifically methylates the N7 position of guanine in position 527 of 16S rRNA. The chain is Ribosomal RNA small subunit methyltransferase G from Legionella pneumophila (strain Lens).